Here is a 115-residue protein sequence, read N- to C-terminus: Ribosomal protein uS4-like (115 aa).

The protein belongs to the universal ribosomal protein uS4 family.

This Azoarcus sp. (strain BH72) protein is Ribosomal protein uS4-like.